Here is a 459-residue protein sequence, read N- to C-terminus: Siroheme synthase (459 aa).

Residues 1–204 (MDHLPIFCQL…ADEKAVNATT (204 aa)) are precorrin-2 dehydrogenase /sirohydrochlorin ferrochelatase. Residues 22 to 23 (DV) and 43 to 44 (LT) each bind NAD(+). A Phosphoserine modification is found at Ser-128. Residues 216–459 (GEVVLVGAGP…KLNWFSNYYD (244 aa)) form a uroporphyrinogen-III C-methyltransferase region. An S-adenosyl-L-methionine-binding site is contributed by Pro-225. Catalysis depends on Asp-248, which acts as the Proton acceptor. Lys-270 functions as the Proton donor in the catalytic mechanism. S-adenosyl-L-methionine-binding positions include 301 to 303 (GGD), Ile-306, 331 to 332 (TA), Met-382, and Gly-411.

This sequence in the N-terminal section; belongs to the precorrin-2 dehydrogenase / sirohydrochlorin ferrochelatase family. The protein in the C-terminal section; belongs to the precorrin methyltransferase family.

It catalyses the reaction uroporphyrinogen III + 2 S-adenosyl-L-methionine = precorrin-2 + 2 S-adenosyl-L-homocysteine + H(+). The catalysed reaction is precorrin-2 + NAD(+) = sirohydrochlorin + NADH + 2 H(+). It carries out the reaction siroheme + 2 H(+) = sirohydrochlorin + Fe(2+). Its pathway is cofactor biosynthesis; adenosylcobalamin biosynthesis; precorrin-2 from uroporphyrinogen III: step 1/1. It participates in cofactor biosynthesis; adenosylcobalamin biosynthesis; sirohydrochlorin from precorrin-2: step 1/1. It functions in the pathway porphyrin-containing compound metabolism; siroheme biosynthesis; precorrin-2 from uroporphyrinogen III: step 1/1. The protein operates within porphyrin-containing compound metabolism; siroheme biosynthesis; siroheme from sirohydrochlorin: step 1/1. Its pathway is porphyrin-containing compound metabolism; siroheme biosynthesis; sirohydrochlorin from precorrin-2: step 1/1. In terms of biological role, multifunctional enzyme that catalyzes the SAM-dependent methylations of uroporphyrinogen III at position C-2 and C-7 to form precorrin-2 via precorrin-1. Then it catalyzes the NAD-dependent ring dehydrogenation of precorrin-2 to yield sirohydrochlorin. Finally, it catalyzes the ferrochelation of sirohydrochlorin to yield siroheme. The polypeptide is Siroheme synthase (Salmonella agona (strain SL483)).